We begin with the raw amino-acid sequence, 277 residues long: NADPH-dependent 7-cyano-7-deazaguanine reductase (277 aa).

A substrate-binding site is contributed by 83–85 (VES). 85 to 86 (SK) lines the NADPH pocket. Catalysis depends on cysteine 184, which acts as the Thioimide intermediate. Aspartate 191 (proton donor) is an active-site residue. 223 to 224 (HE) contacts substrate. NADPH is bound at residue 252–253 (RG).

Belongs to the GTP cyclohydrolase I family. QueF type 2 subfamily. As to quaternary structure, homodimer.

The protein resides in the cytoplasm. It carries out the reaction 7-aminomethyl-7-carbaguanine + 2 NADP(+) = 7-cyano-7-deazaguanine + 2 NADPH + 3 H(+). The protein operates within tRNA modification; tRNA-queuosine biosynthesis. Its function is as follows. Catalyzes the NADPH-dependent reduction of 7-cyano-7-deazaguanine (preQ0) to 7-aminomethyl-7-deazaguanine (preQ1). The protein is NADPH-dependent 7-cyano-7-deazaguanine reductase of Ralstonia nicotianae (strain ATCC BAA-1114 / GMI1000) (Ralstonia solanacearum).